The following is a 751-amino-acid chain: Cellulose synthase-like protein G3 (751 aa).

Helical transmembrane passes span 47 to 67 (IYAV…VHSL) and 72 to 92 (TTLI…MWAT). Active-site residues include Asp161 and Asp466. 6 consecutive transmembrane segments (helical) span residues 543–563 (CWAF…LALL), 577–597 (FWLY…DFVL), 617–639 (FSSH…THGF), 674–694 (TVAI…FAWG), 697–717 (LVLE…IYEA), and 731–751 (VCFV…VFLK).

The protein belongs to the glycosyltransferase 2 family. Plant cellulose synthase-like G subfamily.

It localises to the golgi apparatus membrane. Thought to be a Golgi-localized beta-glycan synthase that polymerize the backbones of noncellulosic polysaccharides (hemicelluloses) of plant cell wall. In Arabidopsis thaliana (Mouse-ear cress), this protein is Cellulose synthase-like protein G3 (CSLG3).